A 700-amino-acid polypeptide reads, in one-letter code: MSFRSSPQGKPHPMTDYQSIRPSEVEQLFEKKFHYQKPKGNKSWQLPPPDQALFSEFYQFEALQGLREQLNAVKSKLNDYGVQEWSAHTNRRDPSGEVSWRLKNDTKAEFVTVAWCKLFECLHRYPLVTKPAVNSMHLCEAPGAFIASLNHYLHSKYEKDEIKWRWRSTTLNPYYEGNAINQMISDDRFIVHTLDNWFFHKDLTGNLLDVANIDHLVERCEVEFQGQVDLVTADGSIDCAAQPDCQEEIVVRLFFAEVLSALRILSSGGNFLVKMFTLFEACSVSLLYTLNCIFEEVHIFKPATSKRGNSEVYVICLNYNKDHPDLPRLLEEIKSKLAQPNDTLVMPLFAKFQIPHDFLMQHEIACRMYMKLQTDAIEGSIYAYESNDRHYLRHLHHLRSLVANTYYSLYKVKPLEDSLCIVDKEATSKALGFQVPVYGGSYTERESLKHGDLLKQIYCLRREFNQLEKCLNNRTPYSYVKNRTAPLNLHISRGAPVQSLQSSMFASEPILILRLRILDTFELDPVWQSAPKCQLESKTLCYLPPTEDEAFHTAQQRFFIDLLEEVKKLKPDSIVFHKFLFLTHYAASLLLFLIESVYQDCCFNSNQAQTLTLSKLKDTANSALEQVLELLKDEQAGAIHSLLDIKELQKNQFSKALIQHNNSIVMTCFRSMLGEESFPMPVAPTSNSDVGSIQESAAVF.

The tract at residues 1 to 21 is disordered; that stretch reads MSFRSSPQGKPHPMTDYQSIR. One can recognise an Adrift-type SAM-dependent 2'-O-MTase domain in the interval 109–321; it reads EFVTVAWCKL…VYVICLNYNK (213 aa). Residue Lys-117 is part of the active site. Residues Gly-143, Trp-164, and Asp-234 each contribute to the S-adenosyl-L-methionine site. Asp-234 is an active-site residue. The active-site Proton acceptor is Lys-274.

It is found in the nucleus. The enzyme catalyses a 5'-end (N(7)-methyl 5'-triphosphoguanosine)-(2'-O-methyl-ribonucleoside)-(ribonucleotide) in mRNA + S-adenosyl-L-methionine = a 5'-end (N(7)-methyl 5'-triphosphoguanosine)-(2'-O-methyl-ribonucleoside)-(2'-O-methyl-ribonucleotide) in mRNA + S-adenosyl-L-homocysteine + H(+). In terms of biological role, probable S-adenosyl-L-methionine-dependent methyltransferase that mediates mRNA cap2 2'-O-ribose methylation to the 5'-cap structure of mRNAs. May methylate the ribose of the second nucleotide of a m(7)GpppG-capped mRNA (cap0) to produce m(7)GpppRmpNm (cap2). Regulates expression of tracheal genes required for pathfinding on the segmental nerve. The protein is Cap-specific mRNA (nucleoside-2'-O-)-methyltransferase 2 (cmtr2) of Drosophila melanogaster (Fruit fly).